A 120-amino-acid chain; its full sequence is Large ribosomal subunit protein uL18 (120 aa).

This sequence belongs to the universal ribosomal protein uL18 family. As to quaternary structure, part of the 50S ribosomal subunit; part of the 5S rRNA/L5/L18/L25 subcomplex. Contacts the 5S and 23S rRNAs.

Functionally, this is one of the proteins that bind and probably mediate the attachment of the 5S RNA into the large ribosomal subunit, where it forms part of the central protuberance. The chain is Large ribosomal subunit protein uL18 from Chloroflexus aurantiacus (strain ATCC 29364 / DSM 637 / Y-400-fl).